The primary structure comprises 466 residues: MAAISQPVIVIGAGLAGTEAAWQIAEAGVPVILYEMRPQRQSPAHHSESFAELVCSNSFGAMASDRAAGLLHEELRRLGSLVFSKASEHQVPAGGALAVDRALFSEDLTRTVADHPLVEIRREELRSLPTEGIVVLCTGPLTSPDLAEDLQRFTGQDYCSFFDAASPIVTGESIDQAIAFRASRYDKGEAAYLNCPLNRDQYLAFREALVTAEQAELKDFEQESAKFFEGCLPIEELARRGEDTMRYGPLKPVGLFDARLGDWRDPENRSRRPYAIVQLRQEDRAGNLWNLVGFQTNLRWGEQKRIFQMIPGLSQAEFVRFGVMHRNTFVNAPQLLDASLQFRQRPTLLAAGQLIGTEGYSAAVAGGWLAGTNAARLALGRSPLVLPDTLVSGSLFRFISSAEPKYFQPMPPNFGILPNLEQPPRNKKDRYAAYRDRALQDLRDWQQTHAIGNLSPSTGLATTAIA.

FAD is bound at residue 12–17 (GAGLAG).

This sequence belongs to the MnmG family. TrmFO subfamily. Requires FAD as cofactor.

Its subcellular location is the cytoplasm. The catalysed reaction is uridine(54) in tRNA + (6R)-5,10-methylene-5,6,7,8-tetrahydrofolate + NADH + H(+) = 5-methyluridine(54) in tRNA + (6S)-5,6,7,8-tetrahydrofolate + NAD(+). It carries out the reaction uridine(54) in tRNA + (6R)-5,10-methylene-5,6,7,8-tetrahydrofolate + NADPH + H(+) = 5-methyluridine(54) in tRNA + (6S)-5,6,7,8-tetrahydrofolate + NADP(+). Its function is as follows. Catalyzes the folate-dependent formation of 5-methyl-uridine at position 54 (M-5-U54) in all tRNAs. This Synechococcus elongatus (strain ATCC 33912 / PCC 7942 / FACHB-805) (Anacystis nidulans R2) protein is Methylenetetrahydrofolate--tRNA-(uracil-5-)-methyltransferase TrmFO.